We begin with the raw amino-acid sequence, 376 residues long: Glutamate 5-kinase (376 aa).

Lysine 15 is an ATP binding site. Residues serine 56, aspartate 143, and asparagine 155 each coordinate substrate. Position 175-176 (175-176 (SD)) interacts with ATP. The PUA domain maps to 281–358 (KGTLTIDAGA…PDVMSILGVS (78 aa)).

Belongs to the glutamate 5-kinase family.

Its subcellular location is the cytoplasm. The catalysed reaction is L-glutamate + ATP = L-glutamyl 5-phosphate + ADP. It functions in the pathway amino-acid biosynthesis; L-proline biosynthesis; L-glutamate 5-semialdehyde from L-glutamate: step 1/2. In terms of biological role, catalyzes the transfer of a phosphate group to glutamate to form L-glutamate 5-phosphate. This is Glutamate 5-kinase from Rhodopseudomonas palustris (strain HaA2).